Here is an 835-residue protein sequence, read N- to C-terminus: Lon protease (835 aa).

Positions 36-234 (VHVFPLLRRP…KALILLKKEL (199 aa)) constitute a Lon N-terminal domain. 387–394 (GPPGVGKT) contacts ATP. Residues 646 to 828 (RTPVGVCMGL…DQVFKISFPN (183 aa)) form the Lon proteolytic domain. Catalysis depends on residues S734 and K777.

This sequence belongs to the peptidase S16 family. Homohexamer. Organized in a ring with a central cavity.

Its subcellular location is the cytoplasm. The catalysed reaction is Hydrolysis of proteins in presence of ATP.. ATP-dependent serine protease that mediates the selective degradation of mutant and abnormal proteins as well as certain short-lived regulatory proteins. Required for cellular homeostasis and for survival from DNA damage and developmental changes induced by stress. Degrades polypeptides processively to yield small peptide fragments that are 5 to 10 amino acids long. Binds to DNA in a double-stranded, site-specific manner. In Protochlamydia amoebophila (strain UWE25), this protein is Lon protease.